The following is a 96-amino-acid chain: Elicitor peptide 3 (96 aa).

The propeptide occupies Met-1–Ile-73. The disordered stretch occupies residues Ser-32 to Asn-96. Over residues Glu-35–Ser-49 the composition is skewed to low complexity. Acidic residues predominate over residues Glu-52–Met-71.

It belongs to the brassicaceae elicitor peptide family.

Its function is as follows. Elicitor of plant defense. This chain is Elicitor peptide 3 (PEP3), found in Arabidopsis thaliana (Mouse-ear cress).